Reading from the N-terminus, the 155-residue chain is Ribosomal RNA large subunit methyltransferase H (155 aa).

S-adenosyl-L-methionine-binding positions include Gly104 and 123–128 (LSAMTF).

Belongs to the RNA methyltransferase RlmH family. In terms of assembly, homodimer.

It localises to the cytoplasm. It carries out the reaction pseudouridine(1915) in 23S rRNA + S-adenosyl-L-methionine = N(3)-methylpseudouridine(1915) in 23S rRNA + S-adenosyl-L-homocysteine + H(+). Specifically methylates the pseudouridine at position 1915 (m3Psi1915) in 23S rRNA. The sequence is that of Ribosomal RNA large subunit methyltransferase H from Oleidesulfovibrio alaskensis (strain ATCC BAA-1058 / DSM 17464 / G20) (Desulfovibrio alaskensis).